Here is a 156-residue protein sequence, read N- to C-terminus: Cyanate hydratase (156 aa).

Active-site residues include R96, E99, and S122.

The protein belongs to the cyanase family.

It carries out the reaction cyanate + hydrogencarbonate + 3 H(+) = NH4(+) + 2 CO2. Catalyzes the reaction of cyanate with bicarbonate to produce ammonia and carbon dioxide. This Escherichia coli O7:K1 (strain IAI39 / ExPEC) protein is Cyanate hydratase.